Consider the following 607-residue polypeptide: Dolichyl-diphosphooligosaccharide--protein glycosyltransferase subunit 1 (607 aa).

An N-terminal signal peptide occupies residues methionine 1–serine 23. Over alanine 24 to glutamate 438 the chain is Lumenal. The residue at position 187 (lysine 187) is an N6-acetyllysine. Asparagine 299 carries N-linked (GlcNAc...) asparagine glycosylation. A helical membrane pass occupies residues proline 439–valine 457. Topologically, residues arginine 458–leucine 607 are cytoplasmic. At lysine 538 the chain carries N6-acetyllysine; alternate. Residue lysine 538 forms a Glycyl lysine isopeptide (Lys-Gly) (interchain with G-Cter in SUMO2); alternate linkage.

This sequence belongs to the OST1 family. Component of the oligosaccharyltransferase (OST) complex. OST exists in two different complex forms which contain common core subunits RPN1, RPN2, OST48, OST4, DAD1 and TMEM258, either STT3A or STT3B as catalytic subunits, and form-specific accessory subunits. STT3A complex assembly occurs through the formation of 3 subcomplexes. Subcomplex 1 contains RPN1 and TMEM258, subcomplex 2 contains the STT3A-specific subunits STT3A, DC2/OSTC, and KCP2 as well as the core subunit OST4, and subcomplex 3 contains RPN2, DAD1, and OST48. The STT3A complex can form stable complexes with the Sec61 complex or with both the Sec61 and TRAP complexes. Interacts with TMEM35A/NACHO. Post-translationally, ubiquitinated by the ECS(ASB11) complex. Ubiquitinated by RNF128, leading to degradation in a proteasome/lysosome-dependent manner. In terms of processing, ufmylated by UFL1 in response to endoplasmic reticulum stress, promoting reticulophagy of endoplasmic reticulum sheets. In terms of tissue distribution, expressed in all tissues tested.

The protein localises to the endoplasmic reticulum membrane. It localises to the melanosome. It participates in protein modification; protein glycosylation. In terms of biological role, subunit of the oligosaccharyl transferase (OST) complex that catalyzes the initial transfer of a defined glycan (Glc(3)Man(9)GlcNAc(2) in eukaryotes) from the lipid carrier dolichol-pyrophosphate to an asparagine residue within an Asn-X-Ser/Thr consensus motif in nascent polypeptide chains, the first step in protein N-glycosylation. N-glycosylation occurs cotranslationally and the complex associates with the Sec61 complex at the channel-forming translocon complex that mediates protein translocation across the endoplasmic reticulum (ER). All subunits are required for a maximal enzyme activity. The chain is Dolichyl-diphosphooligosaccharide--protein glycosyltransferase subunit 1 from Homo sapiens (Human).